Reading from the N-terminus, the 407-residue chain is Frizzled/smoothened-like sans CRD protein J (407 aa).

The signal sequence occupies residues 1-23 (MKFLFSVILVIISFLGISKIVNG). Residues 24 to 89 (QIACPSPFLY…WNSFNKLVKQ (66 aa)) are Extracellular-facing. N-linked (GlcNAc...) asparagine glycosylation occurs at asparagine 37. The chain crosses the membrane as a helical span at residues 90–110 (MGAVAFTCSAIIMIIYGPLMN). The Cytoplasmic segment spans residues 111–120 (RSFFKFDRHT). A helical transmembrane segment spans residues 121-141 (ITVFCFALSTFFIGVSDLMFA). Residues 142 to 169 (TNDVDMVCPESHRYARQTDKTCATNGVL) are Extracellular-facing. The helical transmembrane segment at 170–190 (FQFGWLGSVMWFAFLSIDGFF) threads the bilayer. The Cytoplasmic segment spans residues 191–199 (RASGKKMNK). The helical transmembrane segment at 200–220 (IAFAIVLASIWILNIVLSFAP) threads the bilayer. Residues 221–246 (MGGDQYGAYFVGQVNCWILVKNWQYA) lie on the Extracellular side of the membrane. A helical transmembrane segment spans residues 247–267 (FFWAELIVSLAIGFVGICLTI). At 268–285 (YSLIRKTSDGNTLKHVTP) the chain is on the cytoplasmic side. The chain crosses the membrane as a helical span at residues 286 to 306 (LILVFLLFCQYLYMIIFYGII). Residues 307–354 (NEKKDHYQNILAEQVGCIFNNALAKMKVPGIVYAGECTFNETITFSSQ) are Extracellular-facing. N-linked (GlcNAc...) asparagine glycosylation occurs at asparagine 346. A helical membrane pass occupies residues 355-375 (YAFLFFVRLLGIEIFAFYLFS). At 376–407 (KETLLLIKSSYIATMFGLGDKDAYDVELEETD) the chain is on the cytoplasmic side.

This sequence belongs to the G-protein coupled receptor Fz/Smo family.

The protein localises to the membrane. The sequence is that of Frizzled/smoothened-like sans CRD protein J (fscJ) from Dictyostelium discoideum (Social amoeba).